Consider the following 70-residue polypeptide: Large ribosomal subunit protein bL31 (70 aa).

Lysine 8 carries the N6-acetyllysine modification. Zn(2+) contacts are provided by cysteine 16, cysteine 18, cysteine 37, and cysteine 40.

This sequence belongs to the bacterial ribosomal protein bL31 family. Type A subfamily. Part of the 50S ribosomal subunit. The cofactor is Zn(2+).

Binds the 23S rRNA. In Shigella flexneri, this protein is Large ribosomal subunit protein bL31.